The following is a 320-amino-acid chain: o-succinylbenzoate synthase (320 aa).

Catalysis depends on lysine 133, which acts as the Proton donor. Positions 161, 190, and 213 each coordinate Mg(2+). Lysine 235 acts as the Proton acceptor in catalysis.

The protein belongs to the mandelate racemase/muconate lactonizing enzyme family. MenC type 1 subfamily. Requires a divalent metal cation as cofactor.

The enzyme catalyses (1R,6R)-6-hydroxy-2-succinyl-cyclohexa-2,4-diene-1-carboxylate = 2-succinylbenzoate + H2O. The protein operates within quinol/quinone metabolism; 1,4-dihydroxy-2-naphthoate biosynthesis; 1,4-dihydroxy-2-naphthoate from chorismate: step 4/7. It participates in quinol/quinone metabolism; menaquinone biosynthesis. In terms of biological role, converts 2-succinyl-6-hydroxy-2,4-cyclohexadiene-1-carboxylate (SHCHC) to 2-succinylbenzoate (OSB). The chain is o-succinylbenzoate synthase from Shigella flexneri.